The sequence spans 27 residues: IPLRGAFINGRWDSQCHRFSNGAIACA.

Expressed by the skin glands.

The protein resides in the secreted. Amphibian peptide that shows viricidal activity against human H1N1 influenza A virus. It specifically targets the conserved stalk region of H1 hemagglutinin, and acts by actively destroying influenza virions. It shows a reduced activity on human H3N2 influenza A virus and no activity against other viruses (HIV, SIV, HSV-II, hepatitis C, Ebola, Zika, and Dengue viruses). In vivo, the peptide also protects mice infected with mouse-adapted influenza virus from lethal influenza infection. The peptide synthesized in D-amino acids is inactive. This chain is Urumin, found in Hydrophylax bahuvistara (Wide-spread fungoid frog).